The chain runs to 519 residues: Putative cysteine ligase BshC (519 aa).

Coiled coils occupy residues 51–71 (LNAL…SLKE) and 440–464 (TKLN…HEQA).

This sequence belongs to the BshC family.

Its function is as follows. Involved in bacillithiol (BSH) biosynthesis. May catalyze the last step of the pathway, the addition of cysteine to glucosamine malate (GlcN-Mal) to generate BSH. This Exiguobacterium sibiricum (strain DSM 17290 / CCUG 55495 / CIP 109462 / JCM 13490 / 255-15) protein is Putative cysteine ligase BshC.